A 780-amino-acid chain; its full sequence is MAPYSLLVSRLQKALGARQYHVASVLCQRAKVAMSHFEPNEYIRYDLLEKNINIVRKRLNRPLTLSEKIVYGHLDDPANQEIERGKTYLRLRPDRVAMQDATAQMAMLQFISSGLPKVAVPSTIHCDHLIEAQLGGEKDLRRAKDINQEVYNFLATAGAKYGVGFWRPGSGIIHQIILENYAYPGVLLIGTDSHTPNGGGLGGICIGVGGADAVDVMAGIPWELKCPKVIGVKLTGSLSGWTSPKDVILKVAGILTVKGGTGAIVEYHGPGVDSISCTGMATICNMGAEIGATTSVFPYNHRMKKYLSKTGRADIANLADEFKDHLVPDSGCHYDQLIEINLSELKPHINGPFTPDLAHPVAEVGSVAEKEGWPLDIRVGLIGSCTNSSYEDMGRSAAVAKQALAHGLQCKSQFTITPGSEQIRATIERDGYAQILRDVGGIVLANACGPCIGQWDRKDIKKGEKNTIVTSYNRNFTGRNDANPETHAFVTSPEIVTALAIAGTLKFNPETDFLTGKDGKKFKLEAPDADELPRAEFDPGQDTYQHPPKDSSGQQVDVSPTSQRLQLLEPFDKWDGRDLEDLQILIKVKGKCTTDHISAAGPWLKFRGHLDNISNNLLIGAINVENGKANSVRNAVTQEFGPVPDTARYYKKHGIRWVVIGDENYGEGSSREHAALEPRHLGGRAIITKSFARIHETNLKKQGLLPLTFADPADYNKIHPVDKLTIKGLKDFAPGKPLTCIIKHPNGTQETILLNHTFNETQIEWFRAGSALNRMKELQK.

Residues 1–27 (MAPYSLLVSRLQKALGARQYHVASVLC) constitute a mitochondrion transit peptide. An N6-succinyllysine modification is found at K31. Residue K50 is modified to N6-acetyllysine; alternate. K50 is modified (N6-succinyllysine; alternate). Substrate is bound at residue Q99. N6-acetyllysine; alternate occurs at positions 138 and 144. An N6-succinyllysine; alternate mark is found at K138 and K144. 192 to 194 (DSH) serves as a coordination point for substrate. Position 233 is an N6-acetyllysine; alternate (K233). The residue at position 233 (K233) is an N6-succinyllysine; alternate. Residue C385 participates in [4Fe-4S] cluster binding. K411 is subject to N6-succinyllysine. [4Fe-4S] cluster-binding residues include C448 and C451. The substrate site is built by R474 and R479. Residues K517 and K523 each carry the N6-acetyllysine; alternate modification. K517 and K523 each carry N6-succinyllysine; alternate. The segment covering 524–537 (LEAPDADELPRAEF) has biased composition (basic and acidic residues). A disordered region spans residues 524–560 (LEAPDADELPRAEFDPGQDTYQHPPKDSSGQQVDVSP). N6-succinyllysine is present on K549. Over residues 551-560 (SSGQQVDVSP) the composition is skewed to polar residues. S559 is modified (phosphoserine). K573 is subject to N6-acetyllysine; alternate. The residue at position 573 (K573) is an N6-succinyllysine; alternate. Residue K591 is modified to N6-succinyllysine. K605 bears the N6-acetyllysine; alternate mark. K605 is modified (N6-succinyllysine; alternate). Residue R607 coordinates substrate. K628 is modified (N6-succinyllysine). A Phosphoserine modification is found at S670. Residue 670-671 (SR) coordinates substrate. Residue K689 is modified to N6-succinyllysine. K723 and K730 each carry N6-acetyllysine; alternate. K723 and K730 each carry N6-succinyllysine; alternate. 2 positions are modified to N6-acetyllysine: K736 and K743.

It belongs to the aconitase/IPM isomerase family. As to quaternary structure, monomer. [4Fe-4S] cluster is required as a cofactor. Post-translationally, forms covalent cross-links mediated by transglutaminase TGM2, between a glutamine and the epsilon-amino group of a lysine residue, forming homopolymers and heteropolymers.

It is found in the mitochondrion. The catalysed reaction is citrate = D-threo-isocitrate. The protein operates within carbohydrate metabolism; tricarboxylic acid cycle; isocitrate from oxaloacetate: step 2/2. Functionally, catalyzes the isomerization of citrate to isocitrate via cis-aconitate. This is Aconitate hydratase, mitochondrial (ACO2) from Bos taurus (Bovine).